A 405-amino-acid polypeptide reads, in one-letter code: MDDDDFGGFEAAETFDGGNGETQTTSPAIPWAAFPTVSGVHLSPPSPEIVLDHDHSSAIDCLSSDAIISSPENTHAENSIVSQTIPKAQIQQSTHTHLDISLFPLGLTDEKSNGTIALVDDSEDPGANVSNIQLRQKISSLEIKLKVSEEEKQRIKQDVESLMEKHNVLEKGFLKEKEQEAISFQDRYKELQEKHKQELEDMRKAGHEALSIIVDEYKHQRLLEMLDTEKELLKGKIKEALIQQSQEQKEILEKCLEEERQRNKEALVSAAKLEKEAMKDAVLKVVEEERKNSEKAHAEERELWKTEHAKDQEKVSQEIQKAIQEQRKISQETVKAAIIEEQKRSEKAVEEAVKRTRDELIEYIKEQKRLDQVIRQRSLSSLELFLSCAQKQLSALIATEPVDIE.

Residues 1-16 (MDDDDFGGFEAAETFD) are GGA1-binding motif. The tract at residues 1 to 27 (MDDDDFGGFEAAETFDGGNGETQTTSP) is disordered. Serine 43 and serine 46 each carry phosphoserine. The stretch at 126–376 (GANVSNIQLR…QKRLDQVIRQ (251 aa)) forms a coiled coil. The tract at residues 210–377 (LSIIVDEYKH…KRLDQVIRQR (168 aa)) is homodimerization.

Homodimer. Interacts with GGA1, GGA2 and AP1G1.

Its subcellular location is the membrane. The protein localises to the golgi apparatus. The protein resides in the trans-Golgi network membrane. It is found in the trans-Golgi network. Functionally, involved in the regulation of membrane traffic through the trans-Golgi network (TGN). Functions in close cooperation with the GGAs in the sorting of hydrolases to lysosomes. This chain is Coiled-coil domain-containing protein 91 (CCDC91), found in Pongo abelii (Sumatran orangutan).